The chain runs to 142 residues: MATKSTGGTEKTKSIEVKKKLINVLIVDDDPLNRRLHEMIIKTIGGISQTAKNGEEAVILHRDGEASFDLILMDKEMPERDGVSTTKKLREMKVTSMIVGVTSVADQEEERKAFMEAGLNHCLEKPLTKAKIFPLISHLFDA.

The Response regulatory domain maps to 23–140 (NVLIVDDDPL…KIFPLISHLF (118 aa)). Asp-74 carries the 4-aspartylphosphate modification.

This sequence belongs to the ARR family. Type-A subfamily. Post-translationally, two-component system major event consists of a His-to-Asp phosphorelay between a sensor histidine kinase (HK) and a response regulator (RR). In plants, the His-to-Asp phosphorelay involves an additional intermediate named Histidine-containing phosphotransfer protein (HPt). This multistep phosphorelay consists of a His-Asp-His-Asp sequential transfer of a phosphate group between first a His and an Asp of the HK protein, followed by the transfer to a conserved His of the HPt protein and finally the transfer to an Asp in the receiver domain of the RR protein.

Its subcellular location is the nucleus. In terms of biological role, functions as a response regulator involved in His-to-Asp phosphorelay signal transduction system. Phosphorylation of the Asp residue in the receiver domain activates the ability of the protein to promote the transcription of target genes. Type-A response regulators seem to act as negative regulators of the cytokinin signaling. In Arabidopsis thaliana (Mouse-ear cress), this protein is Two-component response regulator ARR22 (ARR22).